Here is a 732-residue protein sequence, read N- to C-terminus: Catalase-peroxidase (732 aa).

The signal sequence occupies residues 1 to 45 (MDTKVDNAGKCPVVHTHTAHGGRSNRDWWPNQLNLRILHQNSSLS). Residues 97 to 220 (WHSAGTYRTG…LSAVQMGLIY (124 aa)) constitute a cross-link (tryptophyl-tyrosyl-methioninium (Trp-Tyr) (with M-246)). The active-site Proton acceptor is H98. A cross-link (tryptophyl-tyrosyl-methioninium (Tyr-Met) (with W-97)) is located at residues 220-246 (YVNPEGPNGNPDPLAAARDIRETFARM). Heme b is bound at residue H261.

It belongs to the peroxidase family. Peroxidase/catalase subfamily. In terms of assembly, homodimer or homotetramer. Heme b is required as a cofactor. Formation of the three residue Trp-Tyr-Met cross-link is important for the catalase, but not the peroxidase activity of the enzyme.

The catalysed reaction is H2O2 + AH2 = A + 2 H2O. It carries out the reaction 2 H2O2 = O2 + 2 H2O. Its function is as follows. Bifunctional enzyme with both catalase and broad-spectrum peroxidase activity. The sequence is that of Catalase-peroxidase from Rhizobium rhizogenes (strain K84 / ATCC BAA-868) (Agrobacterium radiobacter).